The chain runs to 375 residues: Paralyzed arrest at two-fold protein 6 (375 aa).

A disordered region spans residues 1–51 (MSTLGRSKTPSRDEPKKPGVFEKLSGTLSRKKKAPEDEHGNQGGAHHATDE). Basic and acidic residues predominate over residues 10-20 (PSRDEPKKPGV). 2 consecutive Calponin-homology (CH) domains span residues 99-206 (AQVV…LHYR) and 266-373 (AHVK…TKYK).

Belongs to the parvin family. As to quaternary structure, may interact (via calponin-homology (CH) 2 domain) with pat-4 (via kinase domain). May form a complex with unc-112 and pat-4. Component of an integrin containing attachment complex, composed of at least pat-2, pat-3, pat-4, pat-6, unc-52, unc-97 and unc-112. As to expression, expressed from 1.5 stage embryos, mostly within the muscle cells. In adult hermaphrodites, expressed in the attachments of other muscles, including the uterine, anal depressor, anal sphincter, and vulval muscles, as well as in the spermatheca and the distal tip cells. Expressed in mechanosensory receptor neurons ALML/R, PLML/R, AVM, and PVM. Localizes at body wall muscle attachments.

It is found in the cytoplasm. The protein resides in the cytoskeleton. The protein localises to the myofibril. Its subcellular location is the sarcomere. It localises to the m line. It is found in the perikaryon. The protein resides in the cell projection. The protein localises to the axon. Involved in the regulation of cell adhesion and cytoskeleton organization. Component of an integrin containing attachment complex, which is required for muscle development and maintenance. During embryonic development, required to recruit cpna-1, unc-89 and myofilaments to newly forming integrin attachments composed of integrins pat-2/pat-3, pat-4 and unc-112. Also required to reposition the integrin-based attachments so that they form the highly ordered array of dense body and M-line attachments that are characteristic of mature muscle cells. During the formation of neuromuscular junctions at the larval stage, negatively regulates membrane protrusion from body wall muscles. In Caenorhabditis elegans, this protein is Paralyzed arrest at two-fold protein 6.